The sequence spans 121 residues: Small ribosomal subunit protein bS6 (121 aa).

The interval 96–121 (DTGPSSMMKTVEREDARKTQQAEYQA) is disordered. The segment covering 105-115 (TVEREDARKTQ) has biased composition (basic and acidic residues).

Belongs to the bacterial ribosomal protein bS6 family.

Binds together with bS18 to 16S ribosomal RNA. This chain is Small ribosomal subunit protein bS6, found in Albidiferax ferrireducens (strain ATCC BAA-621 / DSM 15236 / T118) (Rhodoferax ferrireducens).